The primary structure comprises 525 residues: GMP synthase [glutamine-hydrolyzing] (525 aa).

The region spanning 9-207 (RILILDFGSQ…VKEICHCEAL (199 aa)) is the Glutamine amidotransferase type-1 domain. Residue Cys-86 is the Nucleophile of the active site. Catalysis depends on residues His-181 and Glu-183. Residues 208–400 (WTPATIIEDA…LGLPYNMLYR (193 aa)) form the GMPS ATP-PPase domain. 235–241 (SGGVDSS) is a binding site for ATP.

Homodimer.

The enzyme catalyses XMP + L-glutamine + ATP + H2O = GMP + L-glutamate + AMP + diphosphate + 2 H(+). It functions in the pathway purine metabolism; GMP biosynthesis; GMP from XMP (L-Gln route): step 1/1. In terms of biological role, catalyzes the synthesis of GMP from XMP. This is GMP synthase [glutamine-hydrolyzing] from Tolumonas auensis (strain DSM 9187 / NBRC 110442 / TA 4).